The primary structure comprises 261 residues: tRNA pseudouridine synthase A (261 aa).

Residue Asp53 is the Nucleophile of the active site. Tyr111 serves as a coordination point for substrate.

The protein belongs to the tRNA pseudouridine synthase TruA family. In terms of assembly, homodimer.

It carries out the reaction uridine(38/39/40) in tRNA = pseudouridine(38/39/40) in tRNA. Formation of pseudouridine at positions 38, 39 and 40 in the anticodon stem and loop of transfer RNAs. The chain is tRNA pseudouridine synthase A from Shouchella clausii (strain KSM-K16) (Alkalihalobacillus clausii).